Here is a 973-residue protein sequence, read N- to C-terminus: Putative helicase 022R (973 aa).

Residues 473–502 (AKARGGRDSGNEDDEEDSATDEDDSNPWDS) are disordered. Residues 483–498 (NEDDEEDSATDEDDSN) show a composition bias toward acidic residues. Positions 658–840 (GPVTKLLAFF…FVTPGTTAPA (183 aa)) constitute an SF3 helicase domain. Residue 702-709 (GTGNNGKT) coordinates ATP.

This is Putative helicase 022R from Frog virus 3 (isolate Goorha) (FV-3).